We begin with the raw amino-acid sequence, 417 residues long: Serine hydroxymethyltransferase (417 aa).

Residues Leu-121 and 125-127 (GHL) contribute to the (6S)-5,6,7,8-tetrahydrofolate site. Lys-229 is modified (N6-(pyridoxal phosphate)lysine). Residue 355 to 357 (SPF) participates in (6S)-5,6,7,8-tetrahydrofolate binding.

This sequence belongs to the SHMT family. As to quaternary structure, homodimer. Pyridoxal 5'-phosphate serves as cofactor.

It localises to the cytoplasm. It carries out the reaction (6R)-5,10-methylene-5,6,7,8-tetrahydrofolate + glycine + H2O = (6S)-5,6,7,8-tetrahydrofolate + L-serine. The protein operates within one-carbon metabolism; tetrahydrofolate interconversion. It participates in amino-acid biosynthesis; glycine biosynthesis; glycine from L-serine: step 1/1. Functionally, catalyzes the reversible interconversion of serine and glycine with tetrahydrofolate (THF) serving as the one-carbon carrier. This reaction serves as the major source of one-carbon groups required for the biosynthesis of purines, thymidylate, methionine, and other important biomolecules. Also exhibits THF-independent aldolase activity toward beta-hydroxyamino acids, producing glycine and aldehydes, via a retro-aldol mechanism. In Buchnera aphidicola subsp. Acyrthosiphon pisum (strain 5A), this protein is Serine hydroxymethyltransferase.